The following is a 96-amino-acid chain: Aspartyl/glutamyl-tRNA(Asn/Gln) amidotransferase subunit C (96 aa).

The protein belongs to the GatC family. As to quaternary structure, heterotrimer of A, B and C subunits.

The catalysed reaction is L-glutamyl-tRNA(Gln) + L-glutamine + ATP + H2O = L-glutaminyl-tRNA(Gln) + L-glutamate + ADP + phosphate + H(+). The enzyme catalyses L-aspartyl-tRNA(Asn) + L-glutamine + ATP + H2O = L-asparaginyl-tRNA(Asn) + L-glutamate + ADP + phosphate + 2 H(+). In terms of biological role, allows the formation of correctly charged Asn-tRNA(Asn) or Gln-tRNA(Gln) through the transamidation of misacylated Asp-tRNA(Asn) or Glu-tRNA(Gln) in organisms which lack either or both of asparaginyl-tRNA or glutaminyl-tRNA synthetases. The reaction takes place in the presence of glutamine and ATP through an activated phospho-Asp-tRNA(Asn) or phospho-Glu-tRNA(Gln). This is Aspartyl/glutamyl-tRNA(Asn/Gln) amidotransferase subunit C from Neisseria gonorrhoeae (strain ATCC 700825 / FA 1090).